The primary structure comprises 497 residues: MAAYILAIDQGTTSSRALLVRRDGTIAALAQEELPQHFPASGEVEQEAEDIWNTVLSCCRVVLRQAGVGPSDIAAIGITNQRETTLVWERATGRAIHRAIVWQDRRTADTCARLEAEGHGALIRARTGLLIDPYFSATKIAHILEKVPGARARAEKGELAFGTVDSFLLFRLTGGRVHATDATNASRTMLFDIHKGAWDDDLLALFGVPRALLPEVRDCAAEFGATDPEMFGAPIPIRGMAGDQQAAMVGQACFQPGMVKSTYGTGCFALLNTGETPVASRHRLITTIAYQIEGRRTYALEGSIFVAGAAVQWLRDGLKMISHAAESDRLAAEADEGQDVILVPAFVGLGAPYWRPQVRGALFGLTRATGPAELARAALEAVCFQTCDLIDAMHADWPGQSGATVLRVDGGMSASDFTMQRLADLLGAPVDRPAETETTVLGAAYLAGLQCGFFPPPDIFAQGWRLERRFVPAMADEVRAMRLAAWRSAVECLIGRD.

T12 is an ADP binding site. T12, T13, and S14 together coordinate ATP. T12 contributes to the sn-glycerol 3-phosphate binding site. Residue R16 coordinates ADP. Positions 82, 83, 134, and 243 each coordinate sn-glycerol 3-phosphate. Glycerol is bound by residues R82, E83, Y134, D243, and Q244. 2 residues coordinate ADP: T265 and G308. ATP contacts are provided by T265, G308, Q312, and G411. G411 contributes to the ADP binding site.

Belongs to the FGGY kinase family.

The enzyme catalyses glycerol + ATP = sn-glycerol 3-phosphate + ADP + H(+). It participates in polyol metabolism; glycerol degradation via glycerol kinase pathway; sn-glycerol 3-phosphate from glycerol: step 1/1. Its activity is regulated as follows. Inhibited by fructose 1,6-bisphosphate (FBP). Functionally, key enzyme in the regulation of glycerol uptake and metabolism. Catalyzes the phosphorylation of glycerol to yield sn-glycerol 3-phosphate. This Xanthobacter autotrophicus (strain ATCC BAA-1158 / Py2) protein is Glycerol kinase.